The following is a 101-amino-acid chain: Ubiquitin-related modifier 1 homolog 1 (101 aa).

Position 101 is a 1-thioglycine (Gly-101). Residue Gly-101 forms a Glycyl lysine isopeptide (Gly-Lys) (interchain with K-? in acceptor proteins) linkage.

It belongs to the URM1 family. C-terminal thiocarboxylation occurs in 2 steps, it is first acyl-adenylated (-COAMP) via the hesA/moeB/thiF part of the MOCS3 homolog, then thiocarboxylated (-COSH) via the rhodanese domain of the MOCS3 homolog.

The protein resides in the cytoplasm. Its pathway is tRNA modification; 5-methoxycarbonylmethyl-2-thiouridine-tRNA biosynthesis. In terms of biological role, acts as a sulfur carrier required for 2-thiolation of mcm(5)S(2)U at tRNA wobble positions of cytosolic tRNA(Lys), tRNA(Glu) and tRNA(Gln). Serves as sulfur donor in tRNA 2-thiolation reaction by being thiocarboxylated (-COSH) at its C-terminus by MOCS3. The sulfur is then transferred to tRNA to form 2-thiolation of mcm(5)S(2)U. Also acts as a ubiquitin-like protein (UBL) that is covalently conjugated via an isopeptide bond to lysine residues of target proteins. The thiocarboxylated form serves as substrate for conjugation and oxidative stress specifically induces the formation of UBL-protein conjugates. This is Ubiquitin-related modifier 1 homolog 1 from Arabidopsis thaliana (Mouse-ear cress).